The chain runs to 303 residues: MASLKDLRDRIASVKATQKITKAMQMVAAARLHRVQEAAQSARPYAQRMAAILANVATDVDTIDVPPLMRGTGRNDVHLLVVCTAERGLCGAFNMQIARRARQQIKALLSAGKIVKILTVGKKGADILSRDYKALMIDHIDLRSVKRVGFAEAAIISQKIIDLFDKDTFDVCTLFYSEFVSVINQRPVAFGLIPMGSPKGAVEAEDVTQKVDENKNLQSIVYDYEPDVASLLEELVPRNLSVQIFQALLENVAGEMGAKVTAMDNASRNAGEMINKLTVAYNRQRQAQITTELIEIIAGAEAL.

The protein belongs to the ATPase gamma chain family. In terms of assembly, F-type ATPases have 2 components, CF(1) - the catalytic core - and CF(0) - the membrane proton channel. CF(1) has five subunits: alpha(3), beta(3), gamma(1), delta(1), epsilon(1). CF(0) has three main subunits: a, b and c.

The protein localises to the cell inner membrane. In terms of biological role, produces ATP from ADP in the presence of a proton gradient across the membrane. The gamma chain is believed to be important in regulating ATPase activity and the flow of protons through the CF(0) complex. The polypeptide is ATP synthase gamma chain (Bartonella quintana (strain Toulouse) (Rochalimaea quintana)).